The primary structure comprises 391 residues: Casein kinase II subunit alpha (391 aa).

Positions 36-41 (QDDYQL) are interaction with beta subunit. Residues 39–324 (YQLVRKLGRG…AREAMEHPYF (286 aa)) form the Protein kinase domain. ATP contacts are provided by residues 45 to 53 (LGRGKYSEV) and K68. Residue D156 is the Proton acceptor of the active site. 2 positions are modified to phosphothreonine; by CDK1: T344 and T360. Phosphoserine; by CDK1 is present on residues S362 and S370.

It belongs to the protein kinase superfamily. Ser/Thr protein kinase family. CK2 subfamily. In terms of assembly, heterotetramer composed of two catalytic subunits (alpha chain and/or alpha' chain) and two regulatory subunits (beta chains). The tetramer can exist as a combination of 2 alpha/2 beta, 2 alpha'/2 beta or 1 alpha/1 alpha'/2 beta subunits. Also part of a CK2-SPT16-SSRP1 complex composed of SSRP1, SUPT16H, CSNK2A1, CSNK2A2 and CSNK2B, which forms following UV irradiation. Interacts with RNPS1. Interacts with SNAI1. Interacts with PML. Interacts with CCAR2. Interacts with HIRIP3. Post-translationally, phosphorylated at Thr-344, Thr-360, Ser-362 and Ser-370 by CDK1 in prophase and metaphase and dephosphorylated during anaphase. Phosphorylation does not directly affect casein kinase 2 activity, but may contribute to its regulation by forming binding sites for interacting proteins and/or targeting it to different compartments.

It is found in the nucleus. It carries out the reaction L-seryl-[protein] + ATP = O-phospho-L-seryl-[protein] + ADP + H(+). The catalysed reaction is L-threonyl-[protein] + ATP = O-phospho-L-threonyl-[protein] + ADP + H(+). With respect to regulation, constitutively active protein kinase whose activity is not directly affected by phosphorylation. Seems to be regulated by level of expression and localization. In terms of biological role, catalytic subunit of a constitutively active serine/threonine-protein kinase complex that phosphorylates a large number of substrates containing acidic residues C-terminal to the phosphorylated serine or threonine. Regulates numerous cellular processes, such as cell cycle progression, apoptosis and transcription, as well as viral infection. May act as a regulatory node which integrates and coordinates numerous signals leading to an appropriate cellular response. During mitosis, functions as a component of the p53/TP53-dependent spindle assembly checkpoint (SAC) that maintains cyclin-B-CDK1 activity and G2 arrest in response to spindle damage. Also required for p53/TP53-mediated apoptosis, phosphorylating 'Ser-392' of p53/TP53 following UV irradiation. Phosphorylates a number of DNA repair proteins in response to DNA damage, such as MDC1, MRE11, RAD9A, RAD51 and HTATSF1, promoting their recruitment to DNA damage sites. Can also negatively regulate apoptosis. Phosphorylates the caspases CASP9 and CASP2 and the apoptotic regulator NOL3. Phosphorylation protects CASP9 from cleavage and activation by CASP8, and inhibits the dimerization of CASP2 and activation of CASP8. Phosphorylates YY1, protecting YY1 from cleavage by CASP7 during apoptosis. Regulates transcription by direct phosphorylation of RNA polymerases I, II, III and IV. Also phosphorylates and regulates numerous transcription factors including NF-kappa-B, STAT1, CREB1, IRF1, IRF2, ATF1, ATF4, SRF, MAX, JUN, FOS, MYC and MYB. Phosphorylates Hsp90 and its co-chaperones FKBP4 and CDC37, which is essential for chaperone function. Mediates sequential phosphorylation of FNIP1, promoting its gradual interaction with Hsp90, leading to activate both kinase and non-kinase client proteins of Hsp90. Regulates Wnt signaling by phosphorylating CTNNB1 and the transcription factor LEF1. Acts as an ectokinase that phosphorylates several extracellular proteins. Phosphorylates PML at 'Ser-565' and primes it for ubiquitin-mediated degradation. Plays an important role in the circadian clock function by phosphorylating BMAL1 at 'Ser-90' which is pivotal for its interaction with CLOCK and which controls CLOCK nuclear entry. Phosphorylates FMR1, promoting FMR1-dependent formation of a membraneless compartment. May phosphorylate histone H2A on 'Ser-1'. The polypeptide is Casein kinase II subunit alpha (Csnk2a1) (Rattus norvegicus (Rat)).